The chain runs to 102 residues: Small ribosomal subunit protein uS10c (102 aa).

Belongs to the universal ribosomal protein uS10 family. Part of the 30S ribosomal subunit.

It localises to the plastid. The protein resides in the chloroplast. In terms of biological role, involved in the binding of tRNA to the ribosomes. This Guillardia theta (Cryptophyte) protein is Small ribosomal subunit protein uS10c.